A 281-amino-acid polypeptide reads, in one-letter code: Release factor glutamine methyltransferase (281 aa).

S-adenosyl-L-methionine-binding residues include E142 and N184. A substrate-binding site is contributed by 184-187 (NPPY). The tract at residues 261-281 (AADHPDLNNRPRFATARKALP) is disordered.

This sequence belongs to the protein N5-glutamine methyltransferase family. PrmC subfamily.

The enzyme catalyses L-glutaminyl-[peptide chain release factor] + S-adenosyl-L-methionine = N(5)-methyl-L-glutaminyl-[peptide chain release factor] + S-adenosyl-L-homocysteine + H(+). In terms of biological role, methylates the class 1 translation termination release factors RF1/PrfA and RF2/PrfB on the glutamine residue of the universally conserved GGQ motif. This is Release factor glutamine methyltransferase from Streptomyces coelicolor (strain ATCC BAA-471 / A3(2) / M145).